The sequence spans 214 residues: Protein transport protein SEC22 (214 aa).

Residues 1 to 192 are Cytoplasmic-facing; sequence MIKSTLIYRE…QKINFDLLIS (192 aa). Residues 6-117 form the Longin domain; the sequence is LIYREDGLPL…YQFVNFDNFL (112 aa). The 61-residue stretch at 132-192 folds into the v-SNARE coiled-coil homology domain; it reads NLDQLNQELV…QKINFDLLIS (61 aa). Phosphoserine is present on S160. Residues 193–213 traverse the membrane as a helical; Anchor for type IV membrane protein segment; it reads QYAPIVIVAFFFVFLFWWIFL. Position 214 (K214) is a topological domain, vesicular.

Belongs to the synaptobrevin family. In terms of assembly, component of two distinct SNARE complexes consisting of SED5, BOS1, BET1 and SEC22 or UFE1, USE1, SEC20 and SEC22. YKT6 can probably replace SEC22 as subunit of either complex. Interacts with SEC24, YIF1 and YIP1.

Its subcellular location is the membrane. The protein localises to the endoplasmic reticulum membrane. The protein resides in the golgi apparatus membrane. Its function is as follows. Nonessential SNARE involved in targeting and fusion of ER-derived transport vesicles with the Golgi complex as well as Golgi-derived retrograde transport vesicles with the ER. The protein is Protein transport protein SEC22 (SEC22) of Saccharomyces cerevisiae (strain ATCC 204508 / S288c) (Baker's yeast).